Consider the following 213-residue polypeptide: Adenylate kinase (213 aa).

ATP is bound at residue 10–15 (GSGKGS). An NMP region spans residues 30–60 (STGNLFRAILKEDSELARKIKEINVSGGKLV). Residues threonine 31, arginine 36, 58–60 (KLV), 87–90 (GYPR), and glutamine 94 contribute to the AMP site. The tract at residues 123–160 (GRWMCPKCAGIYNIHFKKPQVHGLCDNDQATLYQRADD) is LID. ATP is bound at residue arginine 124. Zn(2+) is bound by residues cysteine 127 and cysteine 130. Residue 133–134 (IY) participates in ATP binding. The Zn(2+) site is built by cysteine 147 and aspartate 150. AMP contacts are provided by arginine 157 and arginine 168. Glutamine 196 is a binding site for ATP.

The protein belongs to the adenylate kinase family. Monomer.

The protein localises to the cytoplasm. It catalyses the reaction AMP + ATP = 2 ADP. The protein operates within purine metabolism; AMP biosynthesis via salvage pathway; AMP from ADP: step 1/1. Catalyzes the reversible transfer of the terminal phosphate group between ATP and AMP. Plays an important role in cellular energy homeostasis and in adenine nucleotide metabolism. The chain is Adenylate kinase from Ureaplasma parvum serovar 3 (strain ATCC 27815 / 27 / NCTC 11736).